The following is a 609-amino-acid chain: Elongation factor 4 (609 aa).

The tr-type G domain occupies 11–193 (SRIRNFSIIA…QIVEKVPAPS (183 aa)). Residues 23 to 28 (DHGKST) and 140 to 143 (NKID) each bind GTP.

This sequence belongs to the TRAFAC class translation factor GTPase superfamily. Classic translation factor GTPase family. LepA subfamily.

It is found in the cell membrane. The catalysed reaction is GTP + H2O = GDP + phosphate + H(+). Required for accurate and efficient protein synthesis under certain stress conditions. May act as a fidelity factor of the translation reaction, by catalyzing a one-codon backward translocation of tRNAs on improperly translocated ribosomes. Back-translocation proceeds from a post-translocation (POST) complex to a pre-translocation (PRE) complex, thus giving elongation factor G a second chance to translocate the tRNAs correctly. Binds to ribosomes in a GTP-dependent manner. In Halalkalibacterium halodurans (strain ATCC BAA-125 / DSM 18197 / FERM 7344 / JCM 9153 / C-125) (Bacillus halodurans), this protein is Elongation factor 4.